The following is a 954-amino-acid chain: Glycine dehydrogenase (decarboxylating) (954 aa).

Lysine 701 bears the N6-(pyridoxal phosphate)lysine mark.

The protein belongs to the GcvP family. The glycine cleavage system is composed of four proteins: P, T, L and H. Pyridoxal 5'-phosphate is required as a cofactor.

It carries out the reaction N(6)-[(R)-lipoyl]-L-lysyl-[glycine-cleavage complex H protein] + glycine + H(+) = N(6)-[(R)-S(8)-aminomethyldihydrolipoyl]-L-lysyl-[glycine-cleavage complex H protein] + CO2. In terms of biological role, the glycine cleavage system catalyzes the degradation of glycine. The P protein binds the alpha-amino group of glycine through its pyridoxal phosphate cofactor; CO(2) is released and the remaining methylamine moiety is then transferred to the lipoamide cofactor of the H protein. The polypeptide is Glycine dehydrogenase (decarboxylating) (Bordetella pertussis (strain Tohama I / ATCC BAA-589 / NCTC 13251)).